Reading from the N-terminus, the 247-residue chain is Centromere protein H (247 aa).

An N-acetylmethionine modification is found at Met1. A compositionally biased stretch (acidic residues) spans 1-14 (MEEQPQMQDADEPA). Residues 1–34 (MEEQPQMQDADEPADSGGEGRAGGPPQVAGAQAA) form a disordered region. Ser16 is modified (phosphoserine). The span at 24–34 (GPPQVAGAQAA) shows a compositional bias: low complexity. Residues 47 to 192 (RAQTKQQLLE…KIDLDSMENS (146 aa)) are a coiled coil. Lys67 is covalently cross-linked (Glycyl lysine isopeptide (Lys-Gly) (interchain with G-Cter in SUMO2)). Residue Thr68 is modified to Phosphothreonine.

This sequence belongs to the CENP-H/MCM16 family. As to quaternary structure, self-associates. Component of the CENPA-NAC complex, at least composed of CENPA, CENPC, CENPH, CENPM, CENPN, CENPT and CENPU. The CENPA-NAC complex interacts with the CENPA-CAD complex, composed of CENPI, CENPK, CENPL, CENPO, CENPP, CENPQ, CENPR and CENPS. Interacts directly with CENPK. Interacts with KIF2C and NDC80. Interacts with TRIM36.

It localises to the nucleus. The protein resides in the chromosome. Its subcellular location is the centromere. The protein localises to the kinetochore. In terms of biological role, component of the CENPA-NAC (nucleosome-associated) complex, a complex that plays a central role in assembly of kinetochore proteins, mitotic progression and chromosome segregation. The CENPA-NAC complex recruits the CENPA-CAD (nucleosome distal) complex and may be involved in incorporation of newly synthesized CENPA into centromeres. Required for chromosome congression and efficiently align the chromosomes on a metaphase plate. This is Centromere protein H from Homo sapiens (Human).